The primary structure comprises 156 residues: MSKPKSETAPVAVNRRARFDYEIEETFEAGLMLMGSEVKSLREGRANIAESYVSAEREGLWLINADIPPYGPANRFNHEPKRHRKLLLKAKEIARLTGASTQQGRTIVALRLYFNGRGLAKLQIGLATGKKTVDKRQTIKDREWNKQKSRLMKNYG.

This sequence belongs to the SmpB family.

Its subcellular location is the cytoplasm. Required for rescue of stalled ribosomes mediated by trans-translation. Binds to transfer-messenger RNA (tmRNA), required for stable association of tmRNA with ribosomes. tmRNA and SmpB together mimic tRNA shape, replacing the anticodon stem-loop with SmpB. tmRNA is encoded by the ssrA gene; the 2 termini fold to resemble tRNA(Ala) and it encodes a 'tag peptide', a short internal open reading frame. During trans-translation Ala-aminoacylated tmRNA acts like a tRNA, entering the A-site of stalled ribosomes, displacing the stalled mRNA. The ribosome then switches to translate the ORF on the tmRNA; the nascent peptide is terminated with the 'tag peptide' encoded by the tmRNA and targeted for degradation. The ribosome is freed to recommence translation, which seems to be the essential function of trans-translation. In Maricaulis maris (strain MCS10) (Caulobacter maris), this protein is SsrA-binding protein.